A 616-amino-acid chain; its full sequence is Chaperone protein HscA homolog (616 aa).

It belongs to the heat shock protein 70 family.

Functionally, chaperone involved in the maturation of iron-sulfur cluster-containing proteins. Has a low intrinsic ATPase activity which is markedly stimulated by HscB. This chain is Chaperone protein HscA homolog, found in Histophilus somni (strain 2336) (Haemophilus somnus).